A 430-amino-acid polypeptide reads, in one-letter code: Glutamate-1-semialdehyde 2,1-aminomutase (430 aa).

Lys267 is modified (N6-(pyridoxal phosphate)lysine).

It belongs to the class-III pyridoxal-phosphate-dependent aminotransferase family. HemL subfamily. In terms of assembly, homodimer. The cofactor is pyridoxal 5'-phosphate.

Its subcellular location is the cytoplasm. It carries out the reaction (S)-4-amino-5-oxopentanoate = 5-aminolevulinate. It participates in porphyrin-containing compound metabolism; protoporphyrin-IX biosynthesis; 5-aminolevulinate from L-glutamyl-tRNA(Glu): step 2/2. In Natranaerobius thermophilus (strain ATCC BAA-1301 / DSM 18059 / JW/NM-WN-LF), this protein is Glutamate-1-semialdehyde 2,1-aminomutase.